The chain runs to 77 residues: U8-lycotoxin-Ls1m (77 aa).

Positions 1–20 (MKLMIFTGLVLFAIVSLIEA) are cleaved as a signal peptide. The propeptide occupies 21 to 26 (QAENEK).

Belongs to the neurotoxin 19 (CSTX) family. 08 (U8-Lctx) subfamily. Contains 4 disulfide bonds. Expressed by the venom gland.

It is found in the secreted. In Lycosa singoriensis (Wolf spider), this protein is U8-lycotoxin-Ls1m.